Consider the following 43-residue polypeptide: Protein PsbN (43 aa).

Residues 5–27 traverse the membrane as a helical segment; the sequence is TLIAISISGLLVSFTGYALYTAF.

It belongs to the PsbN family.

Its subcellular location is the plastid. The protein resides in the chloroplast thylakoid membrane. May play a role in photosystem I and II biogenesis. This Phaseolus vulgaris (Kidney bean) protein is Protein PsbN.